The primary structure comprises 214 residues: ATP phosphoribosyltransferase (214 aa).

The protein belongs to the ATP phosphoribosyltransferase family. Short subfamily. Heteromultimer composed of HisG and HisZ subunits.

The protein resides in the cytoplasm. The enzyme catalyses 1-(5-phospho-beta-D-ribosyl)-ATP + diphosphate = 5-phospho-alpha-D-ribose 1-diphosphate + ATP. It participates in amino-acid biosynthesis; L-histidine biosynthesis; L-histidine from 5-phospho-alpha-D-ribose 1-diphosphate: step 1/9. Functionally, catalyzes the condensation of ATP and 5-phosphoribose 1-diphosphate to form N'-(5'-phosphoribosyl)-ATP (PR-ATP). Has a crucial role in the pathway because the rate of histidine biosynthesis seems to be controlled primarily by regulation of HisG enzymatic activity. The sequence is that of ATP phosphoribosyltransferase from Marinomonas sp. (strain MWYL1).